Consider the following 501-residue polypeptide: Sucrose transport protein SUT2 (501 aa).

Topologically, residues 1–31 (MPRRPSGGGGGAGPAAAAVRKVPLRKLLRAA) are cytoplasmic. A helical membrane pass occupies residues 32 to 52 (SVACGVQFGWALQLSLLTPYV). Residues 53–55 (QEL) lie on the Extracellular side of the membrane. Residues 56–76 (GIPHAFASLVWLCGPLSGLLV) traverse the membrane as a helical segment. Over 77–98 (QPLVGHLSDRIAPAASPLGRRR) the chain is Cytoplasmic. The chain crosses the membrane as a helical span at residues 99 to 119 (PFIAAGAASIAAAVLTVGFSA). Residues 120–135 (DLGRIFGDSITPGSTR) are Extracellular-facing. Residues 136 to 156 (LGAIIVYLVGFWLLDVGNNAT) form a helical membrane-spanning segment. Topologically, residues 157-176 (QGPCRAFLADLTENDPRRTR) are cytoplasmic. The helical transmembrane segment at 177-197 (IANAYFSLFMALGNILGYATG) threads the bilayer. At 198-222 (AYSGWYKIFPFTVTPSCSISCANLK) the chain is on the extracellular side. A helical transmembrane segment spans residues 223–243 (SAFLLDIIILVVTTCITVASV). Topologically, residues 244 to 278 (QEPQSLGSDEADHPSTEQEAFLWELFGSFRYFTLP) are cytoplasmic. The chain crosses the membrane as a helical span at residues 279–299 (VWMVLIVTALTWIGWFPFILF). Topologically, residues 300 to 327 (DTDWMGREIYRGSPDDPSITQSYHDGVR) are extracellular. A helical transmembrane segment spans residues 328–348 (MGSFGLMLNSVLLGFTSIVLE). Residues 349–356 (KLCRKWGA) lie on the Cytoplasmic side of the membrane. Residues 357-377 (GLVWGVSNILMALCFVAMLVI) traverse the membrane as a helical segment. The Extracellular segment spans residues 378–394 (TYVAKNMDYPPSGVPPT). A helical membrane pass occupies residues 395–415 (GIVIASLVVFTILGAPLAITY). At 416–433 (SIPYAMAASRVENLGLGQ) the chain is on the cytoplasmic side. A helical transmembrane segment spans residues 434-454 (GLAMGILNLAIVIPQVIVSLG). Residues 455–467 (SGPWDQLFGGGNA) lie on the Extracellular side of the membrane. A helical transmembrane segment spans residues 468-488 (PAFAVAAAASFIGGLVAILGL). Residues 489–501 (PRARIASRRRGHR) lie on the Cytoplasmic side of the membrane.

The protein belongs to the glycoside-pentoside-hexuronide (GPH) cation symporter transporter (TC 2.A.2.4) family. In terms of assembly, homodimer. Expressed in source leaf blades.

Its subcellular location is the cell membrane. The protein operates within glycan biosynthesis; sucrose metabolism. Functionally, responsible for the transport of sucrose into the cell, with the concomitant uptake of protons (symport system). May also transport other glucosides. This Oryza sativa subsp. indica (Rice) protein is Sucrose transport protein SUT2 (SUT2).